A 315-amino-acid chain; its full sequence is Methionyl-tRNA formyltransferase (315 aa).

Residue 113 to 116 (SLLP) coordinates (6S)-5,6,7,8-tetrahydrofolate.

The protein belongs to the Fmt family.

The catalysed reaction is L-methionyl-tRNA(fMet) + (6R)-10-formyltetrahydrofolate = N-formyl-L-methionyl-tRNA(fMet) + (6S)-5,6,7,8-tetrahydrofolate + H(+). Attaches a formyl group to the free amino group of methionyl-tRNA(fMet). The formyl group appears to play a dual role in the initiator identity of N-formylmethionyl-tRNA by promoting its recognition by IF2 and preventing the misappropriation of this tRNA by the elongation apparatus. The chain is Methionyl-tRNA formyltransferase from Photorhabdus laumondii subsp. laumondii (strain DSM 15139 / CIP 105565 / TT01) (Photorhabdus luminescens subsp. laumondii).